The primary structure comprises 335 residues: Pro-cathepsin H (335 aa).

An N-terminal signal peptide occupies residues 1-22 (MWATLPLLCAGAWLLGVPVCGA). Positions 23–97 (AELCVNSLEK…AEIKHKYLWS (75 aa)) are cleaved as a propeptide — activation peptide. N101 carries an N-linked (GlcNAc...) asparagine glycan. Disulfide bonds link C102–C327, C138–C181, C172–C214, and C272–C322. The propeptide occupies 106-115 (KSNYLRGTGP). C141 is a catalytic residue. N-linked (GlcNAc...) asparagine glycosylation is present at N230. Active-site residues include H281 and N301.

Belongs to the peptidase C1 family. Composed of a mini chain and a large chain. The large chain may be split into heavy and light chain. All chains are held together by disulfide bonds.

Its subcellular location is the lysosome. It carries out the reaction Hydrolysis of proteins, acting as an aminopeptidase (notably, cleaving Arg-|-Xaa bonds) as well as an endopeptidase.. Functionally, important for the overall degradation of proteins in lysosomes. This is Pro-cathepsin H (CTSH) from Homo sapiens (Human).